Reading from the N-terminus, the 60-residue chain is Large ribosomal subunit protein bL32 (60 aa).

A compositionally biased stretch (basic residues) spans 1–20; the sequence is MAKPARHTSKAKRNKRRTHY. The interval 1–22 is disordered; the sequence is MAKPARHTSKAKRNKRRTHYKL.

The protein belongs to the bacterial ribosomal protein bL32 family.

This chain is Large ribosomal subunit protein bL32, found in Streptococcus agalactiae serotype V (strain ATCC BAA-611 / 2603 V/R).